Here is a 357-residue protein sequence, read N- to C-terminus: D-alanine--D-alanine ligase A (357 aa).

In terms of domain architecture, ATP-grasp spans 143-348 (KRLLREAGLA…YSKVIDVLIE (206 aa)). Position 171 to 226 (171 to 226 (AGALGLPFFAKPARQGSSFGVSKVHDRDGFEQAVETALRYDSKALIEEFVDGREIE)) interacts with ATP. Mg(2+) contacts are provided by Asp-302, Glu-315, and Asn-317.

The protein belongs to the D-alanine--D-alanine ligase family. Mg(2+) serves as cofactor. It depends on Mn(2+) as a cofactor.

It localises to the cytoplasm. It carries out the reaction 2 D-alanine + ATP = D-alanyl-D-alanine + ADP + phosphate + H(+). It participates in cell wall biogenesis; peptidoglycan biosynthesis. Cell wall formation. The sequence is that of D-alanine--D-alanine ligase A from Mesorhizobium japonicum (strain LMG 29417 / CECT 9101 / MAFF 303099) (Mesorhizobium loti (strain MAFF 303099)).